We begin with the raw amino-acid sequence, 193 residues long: Ion-translocating oxidoreductase complex subunit B (193 aa).

The hydrophobic stretch occupies residues 1–23; sequence MTFLFIVITLLALIFGAILGFAS. The 4Fe-4S domain maps to 29–87; that stretch reads EADPVVEKIDAILPQSQCGQCGYPGCKPYAEAICNGDEITKCIPGGQTTIVKIAEILGV. Residues Cys46, Cys49, Cys54, Cys70, Cys110, Cys113, Cys116, Cys120, Cys140, Cys143, Cys146, and Cys150 each coordinate [4Fe-4S] cluster. 2 consecutive 4Fe-4S ferredoxin-type domains span residues 101-130 and 131-160; these read KVAF…GTNK and AMHT…MIPV.

It belongs to the 4Fe4S bacterial-type ferredoxin family. RnfB subfamily. The complex is composed of six subunits: RnfA, RnfB, RnfC, RnfD, RnfE and RnfG. [4Fe-4S] cluster is required as a cofactor.

Its subcellular location is the cell inner membrane. In terms of biological role, part of a membrane-bound complex that couples electron transfer with translocation of ions across the membrane. The polypeptide is Ion-translocating oxidoreductase complex subunit B (Haemophilus influenzae (strain 86-028NP)).